The following is a 141-amino-acid chain: Nucleoside diphosphate kinase (141 aa).

6 residues coordinate ATP: Lys-11, Phe-59, Arg-87, Thr-93, Arg-104, and Asn-114. The Pros-phosphohistidine intermediate role is filled by His-117.

The protein belongs to the NDK family. In terms of assembly, homotetramer. The cofactor is Mg(2+).

Its subcellular location is the cytoplasm. The catalysed reaction is a 2'-deoxyribonucleoside 5'-diphosphate + ATP = a 2'-deoxyribonucleoside 5'-triphosphate + ADP. It carries out the reaction a ribonucleoside 5'-diphosphate + ATP = a ribonucleoside 5'-triphosphate + ADP. Its function is as follows. Major role in the synthesis of nucleoside triphosphates other than ATP. The ATP gamma phosphate is transferred to the NDP beta phosphate via a ping-pong mechanism, using a phosphorylated active-site intermediate. This is Nucleoside diphosphate kinase from Cupriavidus taiwanensis (strain DSM 17343 / BCRC 17206 / CCUG 44338 / CIP 107171 / LMG 19424 / R1) (Ralstonia taiwanensis (strain LMG 19424)).